Here is a 216-residue protein sequence, read N- to C-terminus: MKLNVNPTRMELTKLKKRLTTATRGHKLLKDKQDELMRRFIGMIKKNNELRKDVEKELEGSFKDFLMASAVMSPEFLEEAVAYPKESISVDVKKQNIMSVNVPVFDFKRKLEGDKGSIFPYGFANTSAELDGAIEKLYGILPKLLELAKVEKACQLMADEIEKTRRRVNALEYMTIPQLEETIKFIQMKLDENERSTVTRLMKIKSMMEEKQSNMV.

The protein belongs to the V-ATPase D subunit family.

Functionally, produces ATP from ADP in the presence of a proton gradient across the membrane. This chain is V-type ATP synthase subunit D, found in Clostridium botulinum (strain ATCC 19397 / Type A).